Here is a 266-residue protein sequence, read N- to C-terminus: tRNA pseudouridine synthase A (266 aa).

The active-site Nucleophile is Asp-53. Residue Tyr-109 participates in substrate binding.

It belongs to the tRNA pseudouridine synthase TruA family.

The catalysed reaction is uridine(38/39/40) in tRNA = pseudouridine(38/39/40) in tRNA. Its function is as follows. Formation of pseudouridine at positions 38, 39 and 40 in the anticodon stem and loop of transfer RNAs. This is tRNA pseudouridine synthase A from Methanocella arvoryzae (strain DSM 22066 / NBRC 105507 / MRE50).